A 159-amino-acid chain; its full sequence is MKVKLITVGKLKEKYLKDGIAEYIKRLGRFTKFESIELTDEKTPDNASESENKAILDKEGQRILAKVGDRDYVIALAIEGKQFPSEQFAKELEQATLRGYSDITFIIGGSLGLSPKVKKRANQLMSFGLLTFPHQLMRLVLVEQIYRAFMIQQGSPYHK.

S-adenosyl-L-methionine-binding positions include L76, G108, and 127–132; that span reads FGLLTF.

This sequence belongs to the RNA methyltransferase RlmH family. In terms of assembly, homodimer.

It localises to the cytoplasm. It carries out the reaction pseudouridine(1915) in 23S rRNA + S-adenosyl-L-methionine = N(3)-methylpseudouridine(1915) in 23S rRNA + S-adenosyl-L-homocysteine + H(+). In terms of biological role, specifically methylates the pseudouridine at position 1915 (m3Psi1915) in 23S rRNA. The sequence is that of Ribosomal RNA large subunit methyltransferase H from Streptococcus thermophilus (strain ATCC BAA-491 / LMD-9).